We begin with the raw amino-acid sequence, 121 residues long: Nitrogen fixation nifHD region glnB-like protein 2 (121 aa).

This sequence belongs to the P(II) protein family.

Functionally, could be involved in the regulation of nitrogen fixation. This chain is Nitrogen fixation nifHD region glnB-like protein 2 (glnBII), found in Methanococcus maripaludis (Methanococcus deltae).